The chain runs to 653 residues: Endoglin (653 aa).

An N-terminal signal peptide occupies residues 1–24 (MDRGVLPQAIALLLAVCSFGPTAG). The Extracellular portion of the chain corresponds to 25–581 (LAEGVQCDLQ…IVSPGLPDKG (557 aa)). Residues 27–44 (EGVQCDLQPVDPKVTYTT) are OR1, N-terminal part. Residues 27–336 (EGVQCDLQPV…RSCGSGLQPS (310 aa)) form a required for interaction with GDF2 region. Cystine bridges form between Cys31/Cys206, Cys51/Cys181, Cys241/Cys329, Cys349/Cys381, Cys362/Cys442, Cys393/Cys411, and Cys493/Cys549. The tract at residues 45 to 198 (SQVSEGCVAH…MGHTLEWKSH (154 aa)) is OR2. The N-linked (GlcNAc...) asparagine glycan is linked to Asn57. The segment at 199-329 (TQASVLGCHL…SVISLQDRSC (131 aa)) is OR1, C-terminal part. The interval 269–281 (KAWTTGEYSFKIF) is essential for interaction with GDF2. N-linked (GlcNAc...) asparagine glycosylation is present at Asn306. A ZP domain is found at 362-512 (CSDDVMTLVL…MVDLIQNQEA (151 aa)). A helical transmembrane segment spans residues 582–606 (LVLPAVLGITFGAFLIGALLTAALW). Residues 607-653 (YIHSHTRHPGKREPVVAVAAPASSESSSTNHSIGSTQSTPCSTSSMA) lie on the Cytoplasmic side of the membrane. Over residues 625–634 (AAPASSESSS) the composition is skewed to low complexity. The interval 625-653 (AAPASSESSSTNHSIGSTQSTPCSTSSMA) is disordered. The span at 635–653 (TNHSIGSTQSTPCSTSSMA) shows a compositional bias: polar residues. A phosphoserine; by TGFBR1 mark is found at Ser641 and Ser644.

As to quaternary structure, homodimer; disulfide-linked. Forms a heteromeric complex with the signaling receptors for transforming growth factor-beta: TGFBR1 and/or TGFBR2. It is able to bind TGFB1 and TGFB2 with high affinity, but not TGFB3. Interacts with GDF2, forming a heterotetramer with a 2:2 stoichiometry. Interacts with ACVRL1. Can form a heteromeric complex with GDF2 and ACVRL1. Interacts with BMP10. Interacts with DYNLT4. Interacts with ARRB2.

The protein resides in the cell membrane. In terms of biological role, vascular endothelium glycoprotein that plays an important role in the regulation of angiogenesis. Required for normal structure and integrity of adult vasculature. Regulates the migration of vascular endothelial cells. Required for normal extraembryonic angiogenesis and for embryonic heart development. May regulate endothelial cell shape changes in response to blood flow, which drive vascular remodeling and establishment of normal vascular morphology during angiogenesis. May play a role in the binding of endothelial cells to integrins. Acts as a TGF-beta coreceptor and is involved in the TGF-beta/BMP signaling cascade that ultimately leads to the activation of SMAD transcription factors. Required for GDF2/BMP9 signaling through SMAD1 in endothelial cells and modulates TGFB1 signaling through SMAD3. The protein is Endoglin (ENG) of Sus scrofa (Pig).